Reading from the N-terminus, the 190-residue chain is C-type lectin domain family 5 member A (190 aa).

The Cytoplasmic portion of the chain corresponds to 1 to 4 (MNWH). A helical; Signal-anchor for type II membrane protein transmembrane segment spans residues 5–25 (MIISGLIVVVIKVVGMTFFLL). Topologically, residues 26–190 (YFPQVFGKSN…YRWICEMNAK (165 aa)) are extracellular. N-linked (GlcNAc...) asparagine glycans are attached at residues asparagine 51, asparagine 146, and asparagine 153. The C-type lectin domain occupies 80 to 186 (HQGKCFFFSF…CEVSYRWICE (107 aa)). 2 disulfide bridges follow: cysteine 101/cysteine 185 and cysteine 163/cysteine 177.

As to quaternary structure, monomer. Homodimer. The majority of CLEC5A is expressed as a monomeric form on macrophages. Interacts with TYROBP/DAP12. The interaction with TYROBP is required for CLEC5 cell surface expression. Interacts with HCST/DAP10. Forms a CLEC5A/TYROBP/HCST trimolecular complex depending almost solely on TYROBP. Post-translationally, N-glycosylated. Contains sialic acid residues. Strong expression in bone marrow cells and thioglycollate-induced neutrophils (at protein level). Expressed on granulocytes and monocytes from bone marrow and peripheral blood. Expressed in macrophage cell line J-774, but not in T-cell lines, B-cell lines, or mast cell lines.

It localises to the cell membrane. Its function is as follows. Functions as a positive regulator of osteoclastogenesis. Cell surface receptor that signals via TYROBP. Regulates inflammatory responses. This chain is C-type lectin domain family 5 member A (Clec5a), found in Mus musculus (Mouse).